The sequence spans 128 residues: EPIDERMAL PATTERNING FACTOR-like protein 2 (128 aa).

The first 28 residues, 1-28, serve as a signal peptide directing secretion; it reads MVWSSNMSSFLLILLILNSTHFSLMANG. Disulfide bonds link Cys60/Cys119, Cys65/Cys71, and Cys68/Cys121. A compositionally biased stretch (polar residues) spans 79 to 90; that stretch reads NPQTKLHSPLTT. The tract at residues 79–100 is disordered; sequence NPQTKLHSPLTTSSSSSSETIH.

The protein belongs to the plant cysteine rich small secretory peptide family. Epidermal patterning factor subfamily.

It is found in the secreted. Functionally, controls stomatal patterning. The chain is EPIDERMAL PATTERNING FACTOR-like protein 2 from Arabidopsis thaliana (Mouse-ear cress).